Here is a 430-residue protein sequence, read N- to C-terminus: tRNA(Ile)-lysidine synthase (430 aa).

27–32 (SGGSDS) lines the ATP pocket.

This sequence belongs to the tRNA(Ile)-lysidine synthase family.

Its subcellular location is the cytoplasm. The catalysed reaction is cytidine(34) in tRNA(Ile2) + L-lysine + ATP = lysidine(34) in tRNA(Ile2) + AMP + diphosphate + H(+). Functionally, ligates lysine onto the cytidine present at position 34 of the AUA codon-specific tRNA(Ile) that contains the anticodon CAU, in an ATP-dependent manner. Cytidine is converted to lysidine, thus changing the amino acid specificity of the tRNA from methionine to isoleucine. The polypeptide is tRNA(Ile)-lysidine synthase (Rickettsia bellii (strain OSU 85-389)).